We begin with the raw amino-acid sequence, 93 residues long: Small ribosomal subunit protein bS20 (93 aa).

It belongs to the bacterial ribosomal protein bS20 family.

Functionally, binds directly to 16S ribosomal RNA. This Dictyoglomus turgidum (strain DSM 6724 / Z-1310) protein is Small ribosomal subunit protein bS20.